We begin with the raw amino-acid sequence, 390 residues long: Succinate--CoA ligase [ADP-forming] subunit beta (390 aa).

Residues 9–244 form the ATP-grasp domain; sequence KEIFRKYGVP…LDEEEPTEVE (236 aa). Residues Lys46, 53-55, Glu99, Ala102, and Glu107 each bind ATP; that span reads GRG. 2 residues coordinate Mg(2+): Asn199 and Asp213. Substrate is bound by residues Asn264 and 321–323; that span reads GIV.

This sequence belongs to the succinate/malate CoA ligase beta subunit family. As to quaternary structure, heterotetramer of two alpha and two beta subunits. The cofactor is Mg(2+).

It catalyses the reaction succinate + ATP + CoA = succinyl-CoA + ADP + phosphate. The enzyme catalyses GTP + succinate + CoA = succinyl-CoA + GDP + phosphate. Its pathway is carbohydrate metabolism; tricarboxylic acid cycle; succinate from succinyl-CoA (ligase route): step 1/1. Functionally, succinyl-CoA synthetase functions in the citric acid cycle (TCA), coupling the hydrolysis of succinyl-CoA to the synthesis of either ATP or GTP and thus represents the only step of substrate-level phosphorylation in the TCA. The beta subunit provides nucleotide specificity of the enzyme and binds the substrate succinate, while the binding sites for coenzyme A and phosphate are found in the alpha subunit. The sequence is that of Succinate--CoA ligase [ADP-forming] subunit beta from Nautilia profundicola (strain ATCC BAA-1463 / DSM 18972 / AmH).